Here is a 574-residue protein sequence, read N- to C-terminus: Efflux pump FUB11 (574 aa).

The tract at residues 1-44 is disordered; that stretch reads MAIDPQPSSPSLSSETIANDTIGNDNNVNEPSVEPKTQEHQHTV. A compositionally biased stretch (polar residues) spans 9–30; that stretch reads SPSLSSETIANDTIGNDNNVNE. Asn-19 carries N-linked (GlcNAc...) asparagine glycosylation. 11 helical membrane-spanning segments follow: residues 116–136, 148–168, 176–196, 208–228, 235–255, 318–338, 348–368, 394–414, 419–439, 449–469, and 484–504; these read VATL…LIWA, FFFT…AGSI, FLTG…IADM, MFSG…GFLG, WLHG…TVFI, IYIS…PIVF, IGGL…ISFA, AIMG…TTFA, IVPI…FMAL, IFAA…GAAF, and WASS…FLFY. A disordered region spans residues 552–574; sequence HNSHTSATHSHGHRRSLSCTRSV.

It belongs to the major facilitator superfamily. DHA1 family. Polyamines/proton antiporter (TC 2.A.1.2.16) subfamily.

It is found in the cell membrane. Functionally, efflux pump involved in export of fusaric acid, a mycotoxin with low to moderate toxicity to animals and humans, but with high phytotoxic properties. Constitutes a self-protecting mechanism of the fungus against critical levels of fusaric acid within the cell. This is Efflux pump FUB11 from Gibberella fujikuroi (strain CBS 195.34 / IMI 58289 / NRRL A-6831) (Bakanae and foot rot disease fungus).